Consider the following 173-residue polypeptide: MASPRHILLINGPNLNLLGTREPQIYGSTTLHDIEQASQTLASSLGLRLTTFQSNHEGAIIDRIHQAAGFVPSPPSPSPSSAATTTEAGLGPGDKVSAIIINPGAYTHTSIGIRDALLGTGIPFVEVHVSNVHAREAFRHHSYLSDKAVAVICGLGPFGYSAALDFLGRHMKF.

Tyr-26 functions as the Proton acceptor in the catalytic mechanism. Asn-102, His-108, and Asp-115 together coordinate substrate. Catalysis depends on His-128, which acts as the Proton donor. Substrate contacts are provided by residues 129–130 (VS) and Arg-139.

The protein belongs to the type-II 3-dehydroquinase family. As to quaternary structure, homododecamer. Adopts a ring-like structure, composed of an arrangement of two hexameric rings stacked on top of one another.

It carries out the reaction 3-dehydroquinate = 3-dehydroshikimate + H2O. It participates in aromatic compound metabolism; 3,4-dihydroxybenzoate biosynthesis; 3,4-dihydroxybenzoate from 3-dehydroquinate: step 1/2. Its function is as follows. 3-dehydroquinate dehydratase; part of the qa gene cluster that mediates the catabolism of quinic acid (QA) and as such, allows the use of QA as a sole carbon source. Catalyzes the second reaction in the inducible quinic acid catabolic pathway by converting 3-dehydroquinate into 3-dehydroshikimate. The qa cluster encodes 3 inducible enymes (qa-2, qa-3 and qa-4) catalyzing the first three reactions in the catabolism of quinic acid to protocatechuic acid (also known as 3,4-Dihydroxybenzoic acid). The polypeptide is Catabolic 3-dehydroquinase (Neurospora crassa (strain ATCC 24698 / 74-OR23-1A / CBS 708.71 / DSM 1257 / FGSC 987)).